Consider the following 364-residue polypeptide: Aminomethyltransferase (364 aa).

Belongs to the GcvT family. In terms of assembly, the glycine cleavage system is composed of four proteins: P, T, L and H.

The catalysed reaction is N(6)-[(R)-S(8)-aminomethyldihydrolipoyl]-L-lysyl-[protein] + (6S)-5,6,7,8-tetrahydrofolate = N(6)-[(R)-dihydrolipoyl]-L-lysyl-[protein] + (6R)-5,10-methylene-5,6,7,8-tetrahydrofolate + NH4(+). Functionally, the glycine cleavage system catalyzes the degradation of glycine. This chain is Aminomethyltransferase, found in Shewanella sp. (strain MR-4).